We begin with the raw amino-acid sequence, 317 residues long: N-acetylmuramoyl-L-alanine amidase XlyB (317 aa).

Positions Met1 to Ala39 are cleaved as a signal peptide. In terms of domain architecture, N-acetylmuramoyl-L-alanine amidase spans Ala40 to His142. The LysM domain maps to Ser177–Leu221.

The protein belongs to the N-acetylmuramoyl-L-alanine amidase 2 family.

The protein resides in the secreted. The enzyme catalyses Hydrolyzes the link between N-acetylmuramoyl residues and L-amino acid residues in certain cell-wall glycopeptides.. Autolysins are involved in some important biological processes such as cell separation, cell-wall turnover, competence for genetic transformation, formation of the flagella and sporulation. This Bacillus subtilis (strain 168) protein is N-acetylmuramoyl-L-alanine amidase XlyB (xlyB).